The following is a 374-amino-acid chain: Chaperone protein DnaJ (374 aa).

The region spanning serine 4–glycine 69 is the J domain. The CR-type zinc-finger motif lies at glycine 136 to lysine 213. Residues cysteine 149, cysteine 152, cysteine 165, cysteine 168, cysteine 187, cysteine 190, cysteine 201, and cysteine 204 each coordinate Zn(2+). CXXCXGXG motif repeat units follow at residues cysteine 149–glycine 156, cysteine 165–glycine 172, cysteine 187–glycine 194, and cysteine 201–glycine 208.

It belongs to the DnaJ family. As to quaternary structure, homodimer. The cofactor is Zn(2+).

Its subcellular location is the cytoplasm. Participates actively in the response to hyperosmotic and heat shock by preventing the aggregation of stress-denatured proteins and by disaggregating proteins, also in an autonomous, DnaK-independent fashion. Unfolded proteins bind initially to DnaJ; upon interaction with the DnaJ-bound protein, DnaK hydrolyzes its bound ATP, resulting in the formation of a stable complex. GrpE releases ADP from DnaK; ATP binding to DnaK triggers the release of the substrate protein, thus completing the reaction cycle. Several rounds of ATP-dependent interactions between DnaJ, DnaK and GrpE are required for fully efficient folding. Also involved, together with DnaK and GrpE, in the DNA replication of plasmids through activation of initiation proteins. The polypeptide is Chaperone protein DnaJ (Campylobacter jejuni subsp. doylei (strain ATCC BAA-1458 / RM4099 / 269.97)).